Consider the following 107-residue polypeptide: Large ribosomal subunit protein eL21 (107 aa).

Belongs to the eukaryotic ribosomal protein eL21 family.

The sequence is that of Large ribosomal subunit protein eL21 (rpl21e) from Aeropyrum pernix (strain ATCC 700893 / DSM 11879 / JCM 9820 / NBRC 100138 / K1).